The sequence spans 82 residues: uncharacterized protein (82 aa).

This is an uncharacterized protein from Bacillus subtilis (strain 168).